We begin with the raw amino-acid sequence, 178 residues long: Oligoribonuclease (178 aa).

The 162-residue stretch at 7–168 (LIWIDLEMTG…DDIRESIAEL (162 aa)) folds into the Exonuclease domain. Residue Tyr-128 is part of the active site.

Belongs to the oligoribonuclease family.

The protein resides in the cytoplasm. Its function is as follows. 3'-to-5' exoribonuclease specific for small oligoribonucleotides. In Pseudomonas syringae pv. syringae (strain B728a), this protein is Oligoribonuclease.